A 936-amino-acid polypeptide reads, in one-letter code: VPS35 endosomal protein-sorting factor-like (936 aa).

Disordered regions lie at residues 43–69 (SKTK…VDPL) and 87–113 (DPAA…VGPD). The segment covering 51–69 (KGSTSSTSSSSSSSVVDPL) has biased composition (low complexity). Ser265 carries the phosphoserine modification. A helical membrane pass occupies residues 672–692 (AFVRACVAYCFITIPSLVGIF).

It belongs to the VPS35L family. As to quaternary structure, component of the heterotrimeric retriever complex formed by VPS26C, VPS29 and VPS35L. Interacts with VPS29. Interacts with COMMD1, CCDC93 and CCDC22; associates with the CCC (COMMD/CCDC22/CCDC93) complex which contains at least COMMD1 (and possibly other COMM domain-containing proteins), CCDC22 and CCDC93. Interacts with WASHC1, WASHC2A and WASHC2C. Interacts with SNX17 and SNX31.

It localises to the membrane. It is found in the endosome. Acts as a component of the retriever complex. The retriever complex is a heterotrimeric complex related to retromer cargo-selective complex (CSC) and essential for retromer-independent retrieval and recycling of numerous cargos such as integrin alpha-5/beta-1 (ITGA5:ITGB1). The recruitment of the retriever complex to the endosomal membrane involves CCC and WASH complexes. In the endosomes, drives the retrieval and recycling of NxxY-motif-containing cargo proteins by coupling to SNX17, a cargo essential for the homeostatic maintenance of numerous cell surface proteins associated with processes that include cell migration, cell adhesion, nutrient supply and cell signaling. Involved in copper-dependent ATP7A trafficking between the trans-Golgi network and vesicles in the cell periphery; the function is proposed to depend on its association with the CCC complex and cooperation with the WASH complex on early endosomes. Seems not to be required for CCC complex stability. In Rattus norvegicus (Rat), this protein is VPS35 endosomal protein-sorting factor-like.